Reading from the N-terminus, the 252-residue chain is Chitooligosaccharide deacetylase (252 aa).

Mg(2+) is bound by residues His61 and His125.

It belongs to the YdjC deacetylase family. ChbG subfamily. In terms of assembly, homodimer. Mg(2+) serves as cofactor.

It localises to the cytoplasm. The catalysed reaction is N,N'-diacetylchitobiose + H2O = N-acetyl-beta-D-glucosaminyl-(1-&gt;4)-D-glucosamine + acetate. It catalyses the reaction diacetylchitobiose-6'-phosphate + H2O = N'-monoacetylchitobiose-6'-phosphate + acetate. It participates in glycan degradation; chitin degradation. In terms of biological role, involved in the degradation of chitin. ChbG is essential for growth on the acetylated chitooligosaccharides chitobiose and chitotriose but is dispensable for growth on cellobiose and chitosan dimer, the deacetylated form of chitobiose. Deacetylation of chitobiose-6-P and chitotriose-6-P is necessary for both the activation of the chb promoter by the regulatory protein ChbR and the hydrolysis of phosphorylated beta-glucosides by the phospho-beta-glucosidase ChbF. Catalyzes the removal of only one acetyl group from chitobiose-6-P to yield monoacetylchitobiose-6-P, the inducer of ChbR and the substrate of ChbF. The sequence is that of Chitooligosaccharide deacetylase from Salmonella heidelberg (strain SL476).